Consider the following 351-residue polypeptide: Type II methyltransferase M.DsaV (351 aa).

In terms of domain architecture, SAM-dependent MTase C5-type spans 6 to 312; it reads LKFIDLFAGI…QKMLSYIDLT (307 aa). Cysteine 75 is a catalytic residue.

Belongs to the class I-like SAM-binding methyltransferase superfamily. C5-methyltransferase family.

It catalyses the reaction a 2'-deoxycytidine in DNA + S-adenosyl-L-methionine = a 5-methyl-2'-deoxycytidine in DNA + S-adenosyl-L-homocysteine + H(+). Functionally, a methylase, recognizes the double-stranded sequence 5'-CCNGG-3', methylates C-2 on both strands, and protects the DNA from cleavage by the DsaV endonuclease. The polypeptide is Type II methyltransferase M.DsaV (Dactylococcopsis salina (Myxobaktron salinum)).